The primary structure comprises 390 residues: Ribosomal RNA small subunit methyltransferase H (390 aa).

Residues 47–49 (GGH), Asp-66, Phe-93, Asp-122, and Gln-129 each bind S-adenosyl-L-methionine. The interval 282 to 390 (SKTPPGLPID…SHREDVEGEQ (109 aa)) is disordered. Residues 305–316 (GSEKADEQENNK) show a composition bias toward basic and acidic residues. Polar residues predominate over residues 348–358 (SGSSTTYSARS). Composition is skewed to basic and acidic residues over residues 360–372 (SRHE…REHL) and 381–390 (SHREDVEGEQ).

It belongs to the methyltransferase superfamily. RsmH family.

It localises to the cytoplasm. The catalysed reaction is cytidine(1402) in 16S rRNA + S-adenosyl-L-methionine = N(4)-methylcytidine(1402) in 16S rRNA + S-adenosyl-L-homocysteine + H(+). Specifically methylates the N4 position of cytidine in position 1402 (C1402) of 16S rRNA. In Corynebacterium kroppenstedtii (strain DSM 44385 / JCM 11950 / CIP 105744 / CCUG 35717), this protein is Ribosomal RNA small subunit methyltransferase H.